The following is a 138-amino-acid chain: Protein FAM136A (138 aa).

Position 2 is an N-acetylalanine (A2). A phosphothreonine mark is found at T124 and T126.

This sequence belongs to the FAM136 family.

The chain is Protein FAM136A (Fam136a) from Rattus norvegicus (Rat).